The following is a 330-amino-acid chain: Ketol-acid reductoisomerase (NADP(+)) (330 aa).

In terms of domain architecture, KARI N-terminal Rossmann spans 3–184 (LPVYYDKDID…GGGRMGVLET (182 aa)). Residues 26–29 (YGVQ), Ser-52, and Ser-54 contribute to the NADP(+) site. Residue His-109 is part of the active site. Gly-135 contributes to the NADP(+) binding site. The 145-residue stretch at 185 to 329 (SFKEECESDL…EILRAPFNHK (145 aa)) folds into the KARI C-terminal knotted domain. Mg(2+) contacts are provided by Asp-193, Glu-197, Glu-229, and Glu-233. Ser-254 serves as a coordination point for substrate.

This sequence belongs to the ketol-acid reductoisomerase family. The cofactor is Mg(2+).

It carries out the reaction (2R)-2,3-dihydroxy-3-methylbutanoate + NADP(+) = (2S)-2-acetolactate + NADPH + H(+). The enzyme catalyses (2R,3R)-2,3-dihydroxy-3-methylpentanoate + NADP(+) = (S)-2-ethyl-2-hydroxy-3-oxobutanoate + NADPH + H(+). It functions in the pathway amino-acid biosynthesis; L-isoleucine biosynthesis; L-isoleucine from 2-oxobutanoate: step 2/4. It participates in amino-acid biosynthesis; L-valine biosynthesis; L-valine from pyruvate: step 2/4. Functionally, involved in the biosynthesis of branched-chain amino acids (BCAA). Catalyzes an alkyl-migration followed by a ketol-acid reduction of (S)-2-acetolactate (S2AL) to yield (R)-2,3-dihydroxy-isovalerate. In the isomerase reaction, S2AL is rearranged via a Mg-dependent methyl migration to produce 3-hydroxy-3-methyl-2-ketobutyrate (HMKB). In the reductase reaction, this 2-ketoacid undergoes a metal-dependent reduction by NADPH to yield (R)-2,3-dihydroxy-isovalerate. The chain is Ketol-acid reductoisomerase (NADP(+)) from Helicobacter pylori (strain J99 / ATCC 700824) (Campylobacter pylori J99).